The primary structure comprises 401 residues: Cytochrome P450 BJ-1 (401 aa).

Cysteine 350 provides a ligand contact to heme.

Belongs to the cytochrome P450 family. Heme is required as a cofactor.

In terms of biological role, cytochromes P450 are a group of heme-thiolate monooxygenases. They oxidize a variety of structurally unrelated compounds, including steroids, fatty acids, and xenobiotics. The protein is Cytochrome P450 BJ-1 (cyp112) of Bradyrhizobium diazoefficiens (strain JCM 10833 / BCRC 13528 / IAM 13628 / NBRC 14792 / USDA 110).